The following is a 350-amino-acid chain: Phospho-2-dehydro-3-deoxyheptonate aldolase, Phe-sensitive (350 aa).

Lysine 244 bears the N6-acetyllysine mark.

It belongs to the class-I DAHP synthase family. As to quaternary structure, homotetramer.

The enzyme catalyses D-erythrose 4-phosphate + phosphoenolpyruvate + H2O = 7-phospho-2-dehydro-3-deoxy-D-arabino-heptonate + phosphate. It functions in the pathway metabolic intermediate biosynthesis; chorismate biosynthesis; chorismate from D-erythrose 4-phosphate and phosphoenolpyruvate: step 1/7. Functionally, stereospecific condensation of phosphoenolpyruvate (PEP) and D-erythrose-4-phosphate (E4P) giving rise to 3-deoxy-D-arabino-heptulosonate-7-phosphate (DAHP). The chain is Phospho-2-dehydro-3-deoxyheptonate aldolase, Phe-sensitive (aroG) from Escherichia coli O157:H7.